Consider the following 940-residue polypeptide: Isoleucine--tRNA ligase (940 aa).

The 'HIGH' region motif lies at Pro58 to His68. Residue Glu564 coordinates L-isoleucyl-5'-AMP. The 'KMSKS' region motif lies at Lys605–Ser609. Lys608 serves as a coordination point for ATP. Residues Cys903, Cys906, Cys923, and Cys926 each coordinate Zn(2+).

It belongs to the class-I aminoacyl-tRNA synthetase family. IleS type 1 subfamily. In terms of assembly, monomer. Zn(2+) serves as cofactor.

It localises to the cytoplasm. The catalysed reaction is tRNA(Ile) + L-isoleucine + ATP = L-isoleucyl-tRNA(Ile) + AMP + diphosphate. Functionally, catalyzes the attachment of isoleucine to tRNA(Ile). As IleRS can inadvertently accommodate and process structurally similar amino acids such as valine, to avoid such errors it has two additional distinct tRNA(Ile)-dependent editing activities. One activity is designated as 'pretransfer' editing and involves the hydrolysis of activated Val-AMP. The other activity is designated 'posttransfer' editing and involves deacylation of mischarged Val-tRNA(Ile). This Shewanella sp. (strain W3-18-1) protein is Isoleucine--tRNA ligase.